A 782-amino-acid polypeptide reads, in one-letter code: MFPPSGSTGLIPPSHFQARPLSTLPRMAPTWLSDIPLVQPPGHQDVSERRLDTQRPQVTMWERDVSSDRQEPGRRGRSWGLEGSQALSQQAEVIVRQLQELRRLEEEVRLLRETSLQQKMRLEAQAMELEALARAEKAGRAEAEGLRAALAGAEVVRKNLEEGSQRELEEVQRLHQEQLSSLTQAHEEALSSLTSKAEGLEKSLSSLETRRAGEAKELAEAQREAELLRKQLSKTQEDLEAQVTLVENLRKYVGEQVPSEVHSQTWELERQKLLETMQHLQEDRDSLHATAELLQVRVQSLTHILALQEEELTRKVQPSDSLEPEFTRKCQSLLNRWREKVFALMVQLKAQELEHSDSVKQLKGQVASLQEKVTSQSQEQAILQRSLQDKAAEVEVERMGAKGLQLELSRAQEARRRWQQQTASAEEQLRLVVNAVSSSQIWLETTMAKVEGAAAQLPSLNNRLSYAVRKVHTIRGLIARKLALAQLRQESCPLPPPVTDVSLELQQLREERNRLDAELQLSARLIQQEVGRAREQGEAERQQLSKVAQQLEQELQQTQESLASLGLQLEVARQGQQESTEEAASLRQELTQQQELYGQALQEKVAEVETRLREQLSDTERRLNEARREHAKAVVSLRQIQRRAAQEKERSQELRRLQEEARKEEGQRLARRLQELERDKNLMLATLQQEGLLSRYKQQRLLTVLPSLLDKKKSVVSSPRPPECSASAPVAAAVPTRESIKGSLSVLLDDLQDLSEAISKEEAVCQGDNLDRCSSSNPQMSS.

2 stretches are compositionally biased toward basic and acidic residues: residues 62-74 and 208-218; these read ERDV…EPGR and ETRRAGEAKEL. Disordered regions lie at residues 62-82 and 177-218; these read ERDV…WGLE and EQLS…AKEL. Coiled-coil stretches lie at residues 111–303, 344–437, and 498–691; these read LRET…SLTH, LMVQ…NAVS, and VTDV…QQEG.

Found in all tissues tested, abundantly expressed in heart, liver, skeletal muscle, kidney and pancreas, and to a lesser extent in lung and placenta. Overexpressed in keratinocytes of psoriatic lesions.

It localises to the cytoplasm. The protein localises to the nucleus. Functionally, may be a regulator of keratinocyte proliferation or differentiation. The sequence is that of Coiled-coil alpha-helical rod protein 1 (CCHCR1) from Homo sapiens (Human).